Consider the following 768-residue polypeptide: Putative calcium up-regulated protein H (768 aa).

The segment at 1–22 (MINIEDISKSSNQSEEKQLKST) is disordered. Ricin B-type lectin domains lie at 25-145 (KPKY…WTTF) and 116-248 (QGNG…WGIN).

This sequence belongs to the cup family.

The protein localises to the cytoplasm. The protein resides in the membrane. May play an important role in stabilizing and/or regulating the cell membrane during Ca(2+) stress or certain stages of development. This is Putative calcium up-regulated protein H (cupH) from Dictyostelium discoideum (Social amoeba).